We begin with the raw amino-acid sequence, 212 residues long: Protein-L-isoaspartate O-methyltransferase (212 aa).

Residue serine 60 is part of the active site.

The protein belongs to the methyltransferase superfamily. L-isoaspartyl/D-aspartyl protein methyltransferase family.

Its subcellular location is the cytoplasm. The catalysed reaction is [protein]-L-isoaspartate + S-adenosyl-L-methionine = [protein]-L-isoaspartate alpha-methyl ester + S-adenosyl-L-homocysteine. Catalyzes the methyl esterification of L-isoaspartyl residues in peptides and proteins that result from spontaneous decomposition of normal L-aspartyl and L-asparaginyl residues. It plays a role in the repair and/or degradation of damaged proteins. This chain is Protein-L-isoaspartate O-methyltransferase, found in Methanococcus maripaludis (strain C7 / ATCC BAA-1331).